We begin with the raw amino-acid sequence, 136 residues long: Single-stranded DNA-binding protein 1 (136 aa).

Positions 4 to 109 (LNKMQLIGNL…IMAKEMQMLG (106 aa)) constitute an SSB domain. The interval 109–136 (GKKQDNNKVGNARHGDALPADEDDYYDF) is disordered. Residues 127-136 (PADEDDYYDF) are compositionally biased toward acidic residues.

As to quaternary structure, homotetramer.

The chain is Single-stranded DNA-binding protein 1 (ssb1) from Xylella fastidiosa (strain 9a5c).